Here is a 338-residue protein sequence, read N- to C-terminus: LIX1-like protein (338 aa).

The segment at 1 to 65 is disordered; it reads METMRAQRLQ…LLLAGAPGLP (65 aa). A compositionally biased stretch (low complexity) spans 29–38; the sequence is TGAPTSAATP. Positions 39-56 are enriched in pro residues; it reads PAGPPPAPPPPAPPPPPL.

This sequence belongs to the LIX1 family.

The protein is LIX1-like protein (Lix1l) of Rattus norvegicus (Rat).